The sequence spans 198 residues: Transcriptional regulator GfcR (198 aa).

Belongs to the purine/pyrimidine phosphoribosyltransferase family. GfcR subfamily.

The chain is Transcriptional regulator GfcR from Methanospirillum hungatei JF-1 (strain ATCC 27890 / DSM 864 / NBRC 100397 / JF-1).